The following is a 185-amino-acid chain: Ribosome-recycling factor (185 aa).

It belongs to the RRF family.

The protein resides in the cytoplasm. Its function is as follows. Responsible for the release of ribosomes from messenger RNA at the termination of protein biosynthesis. May increase the efficiency of translation by recycling ribosomes from one round of translation to another. The sequence is that of Ribosome-recycling factor from Aliivibrio fischeri (strain ATCC 700601 / ES114) (Vibrio fischeri).